Here is a 393-residue protein sequence, read N- to C-terminus: Succinate--CoA ligase [ADP-forming] subunit beta (393 aa).

In terms of domain architecture, ATP-grasp spans 9 to 251 (KALFEKFGVL…LNEEDPKEIE (243 aa)). Residues Lys-46, 53–55 (GRG), Ser-109, and Glu-114 contribute to the ATP site. The Mg(2+) site is built by Asn-206 and Asp-220. Substrate contacts are provided by residues Asn-271 and 328-330 (GIM).

This sequence belongs to the succinate/malate CoA ligase beta subunit family. Heterotetramer of two alpha and two beta subunits. Requires Mg(2+) as cofactor.

It carries out the reaction succinate + ATP + CoA = succinyl-CoA + ADP + phosphate. The catalysed reaction is GTP + succinate + CoA = succinyl-CoA + GDP + phosphate. It participates in carbohydrate metabolism; tricarboxylic acid cycle; succinate from succinyl-CoA (ligase route): step 1/1. Succinyl-CoA synthetase functions in the citric acid cycle (TCA), coupling the hydrolysis of succinyl-CoA to the synthesis of either ATP or GTP and thus represents the only step of substrate-level phosphorylation in the TCA. The beta subunit provides nucleotide specificity of the enzyme and binds the substrate succinate, while the binding sites for coenzyme A and phosphate are found in the alpha subunit. This Opitutus terrae (strain DSM 11246 / JCM 15787 / PB90-1) protein is Succinate--CoA ligase [ADP-forming] subunit beta.